The primary structure comprises 320 residues: Cytochrome c biogenesis protein CcsA (320 aa).

A run of 8 helical transmembrane segments spans residues 15–35 (FSIV…DEII), 43–63 (KGMI…WIYS), 71–91 (LYES…VPYF), 98–118 (LSTI…SGLL), 143–163 (MILS…LLVI), 224–244 (VISL…VWAN), 251–271 (WNWD…AIYL), and 285–305 (AIVA…VNLL).

This sequence belongs to the CcmF/CycK/Ccl1/NrfE/CcsA family. In terms of assembly, may interact with Ccs1.

The protein resides in the plastid. Its subcellular location is the chloroplast thylakoid membrane. In terms of biological role, required during biogenesis of c-type cytochromes (cytochrome c6 and cytochrome f) at the step of heme attachment. The chain is Cytochrome c biogenesis protein CcsA from Panax ginseng (Korean ginseng).